A 437-amino-acid chain; its full sequence is Methylenetetrahydrofolate--tRNA-(uracil-5-)-methyltransferase TrmFO (437 aa).

10-15 (GAGLAG) contributes to the FAD binding site.

The protein belongs to the MnmG family. TrmFO subfamily. The cofactor is FAD.

It is found in the cytoplasm. It catalyses the reaction uridine(54) in tRNA + (6R)-5,10-methylene-5,6,7,8-tetrahydrofolate + NADH + H(+) = 5-methyluridine(54) in tRNA + (6S)-5,6,7,8-tetrahydrofolate + NAD(+). It carries out the reaction uridine(54) in tRNA + (6R)-5,10-methylene-5,6,7,8-tetrahydrofolate + NADPH + H(+) = 5-methyluridine(54) in tRNA + (6S)-5,6,7,8-tetrahydrofolate + NADP(+). Its function is as follows. Catalyzes the folate-dependent formation of 5-methyl-uridine at position 54 (M-5-U54) in all tRNAs. The sequence is that of Methylenetetrahydrofolate--tRNA-(uracil-5-)-methyltransferase TrmFO from Brevibacillus brevis (strain 47 / JCM 6285 / NBRC 100599).